Consider the following 77-residue polypeptide: Acyl carrier protein (77 aa).

The Carrier domain maps to 2–77 (ADVLERVTKI…DAVTYIESHL (76 aa)). Residue Ser37 is modified to O-(pantetheine 4'-phosphoryl)serine.

Belongs to the acyl carrier protein (ACP) family. 4'-phosphopantetheine is transferred from CoA to a specific serine of apo-ACP by AcpS. This modification is essential for activity because fatty acids are bound in thioester linkage to the sulfhydryl of the prosthetic group.

The protein resides in the cytoplasm. It functions in the pathway lipid metabolism; fatty acid biosynthesis. Functionally, carrier of the growing fatty acid chain in fatty acid biosynthesis. In Bacillus anthracis (strain A0248), this protein is Acyl carrier protein.